Reading from the N-terminus, the 437-residue chain is GTPase Era, mitochondrial (437 aa).

A mitochondrion-targeting transit peptide spans Met1–Cys43. Residues Arg112–Gly330 enclose the Era-type G domain. The G1 stretch occupies residues Gly120–Ser127. Position 120 to 127 (Gly120 to Ser127) interacts with GTP. Residues His146–Ser150 are G2. Positions Asp167–Gly170 are G3. Asp167–Leu171 contributes to the GTP binding site. Ser173 is modified (phosphoserine). Asn236–Asp239 contributes to the GTP binding site. The interval Asn236–Asp239 is G4. Positions Leu264–Gln296 are disordered. Residues Leu308–Ala310 form a G5 region. In terms of domain architecture, KH type-2 spans Leu360 to Lys437.

Belongs to the TRAFAC class TrmE-Era-EngA-EngB-Septin-like GTPase superfamily. Era GTPase family.

It localises to the mitochondrion matrix. The protein localises to the mitochondrion inner membrane. Functionally, probable GTPase that plays a role in the mitochondrial ribosomal small subunit assembly. Specifically binds the 12S mitochondrial rRNA (12S mt-rRNA) to a 33 nucleotide section delineating the 3' terminal stem-loop region. May act as a chaperone that protects the 12S mt-rRNA on the 28S mitoribosomal subunit during ribosomal small subunit assembly. The chain is GTPase Era, mitochondrial (ERAL1) from Bos taurus (Bovine).